The primary structure comprises 423 residues: D-tagatose-1,6-bisphosphate aldolase subunit GatZ (423 aa).

The protein belongs to the GatZ/KbaZ family. GatZ subfamily. In terms of assembly, forms a complex with GatY.

The protein operates within carbohydrate metabolism; D-tagatose 6-phosphate degradation; D-glyceraldehyde 3-phosphate and glycerone phosphate from D-tagatose 6-phosphate: step 2/2. Its function is as follows. Component of the tagatose-1,6-bisphosphate aldolase GatYZ that is required for full activity and stability of the Y subunit. Could have a chaperone-like function for the proper and stable folding of GatY. When expressed alone, GatZ does not show any aldolase activity. Is involved in the catabolism of galactitol. The sequence is that of D-tagatose-1,6-bisphosphate aldolase subunit GatZ from Salmonella heidelberg (strain SL476).